The sequence spans 679 residues: Transketolase (679 aa).

Residue histidine 30 participates in substrate binding. Thiamine diphosphate-binding positions include histidine 69 and 116 to 118; that span reads GPL. Aspartate 157 is a Mg(2+) binding site. Glycine 158 and asparagine 187 together coordinate thiamine diphosphate. 2 residues coordinate Mg(2+): asparagine 187 and isoleucine 189. Substrate-binding residues include histidine 262, arginine 358, and serine 385. Histidine 262 contacts thiamine diphosphate. Positions 417 and 444 each coordinate thiamine diphosphate. The active-site Proton donor is the glutamate 417. Residues histidine 468, aspartate 476, and arginine 527 each coordinate substrate.

This sequence belongs to the transketolase family. Homodimer. It depends on Mg(2+) as a cofactor. Requires Ca(2+) as cofactor. Mn(2+) serves as cofactor. Co(2+) is required as a cofactor. The cofactor is thiamine diphosphate.

The catalysed reaction is D-sedoheptulose 7-phosphate + D-glyceraldehyde 3-phosphate = aldehydo-D-ribose 5-phosphate + D-xylulose 5-phosphate. In terms of biological role, catalyzes the transfer of a two-carbon ketol group from a ketose donor to an aldose acceptor, via a covalent intermediate with the cofactor thiamine pyrophosphate. The sequence is that of Transketolase (TKL1) from Kluyveromyces lactis (strain ATCC 8585 / CBS 2359 / DSM 70799 / NBRC 1267 / NRRL Y-1140 / WM37) (Yeast).